An 889-amino-acid polypeptide reads, in one-letter code: Exocyst complex component 1 (889 aa).

Phosphoserine occurs at positions 145 and 148. Residues 156–269 adopt a coiled-coil conformation; that stretch reads RAVQKTQHMD…GHVKETMEKI (114 aa). Ser-456 carries the phosphoserine modification.

The protein belongs to the SEC3 family. In terms of assembly, the exocyst complex is composed of Sec3/Exoc1, Sec5/Exoc2, Sec6/Exoc3, Sec8/Exoc4, Sec10/Exoc5, Sec15/Exoc6, Exo70/Exoc7 and Exo84/Exoc8.

In terms of biological role, component of the exocyst complex involved in the docking of exocytic vesicles with fusion sites on the plasma membrane. The protein is Exocyst complex component 1 of Drosophila melanogaster (Fruit fly).